A 422-amino-acid polypeptide reads, in one-letter code: ATP phosphoribosyltransferase regulatory subunit (422 aa).

The protein belongs to the class-II aminoacyl-tRNA synthetase family. HisZ subfamily. In terms of assembly, heteromultimer composed of HisG and HisZ subunits.

The protein localises to the cytoplasm. It functions in the pathway amino-acid biosynthesis; L-histidine biosynthesis; L-histidine from 5-phospho-alpha-D-ribose 1-diphosphate: step 1/9. Functionally, required for the first step of histidine biosynthesis. May allow the feedback regulation of ATP phosphoribosyltransferase activity by histidine. This chain is ATP phosphoribosyltransferase regulatory subunit, found in Clostridium botulinum (strain 657 / Type Ba4).